A 144-amino-acid chain; its full sequence is Neuritin-B (144 aa).

The first 27 residues, Met1–Ala27, serve as a signal peptide directing secretion. Ser114 is lipidated: GPI-anchor amidated serine. A propeptide spans Thr115–Gln144 (removed in mature form).

It belongs to the neuritin family.

It localises to the cell membrane. Modulates postsynaptic dendritic arbor elaboration and synaptic maturation. The protein is Neuritin-B (nrn1-b) of Xenopus laevis (African clawed frog).